The following is a 344-amino-acid chain: UDP-N-acetylenolpyruvoylglucosamine reductase (344 aa).

The 171-residue stretch at 17-187 (VDYACSELIS…TGVGIKLAKK (171 aa)) folds into the FAD-binding PCMH-type domain. The active site involves R163. S233 (proton donor) is an active-site residue. Residue E329 is part of the active site.

The protein belongs to the MurB family. It depends on FAD as a cofactor.

The protein resides in the cytoplasm. The enzyme catalyses UDP-N-acetyl-alpha-D-muramate + NADP(+) = UDP-N-acetyl-3-O-(1-carboxyvinyl)-alpha-D-glucosamine + NADPH + H(+). The protein operates within cell wall biogenesis; peptidoglycan biosynthesis. Its function is as follows. Cell wall formation. The polypeptide is UDP-N-acetylenolpyruvoylglucosamine reductase (Shewanella sediminis (strain HAW-EB3)).